Reading from the N-terminus, the 244-residue chain is 5-oxoprolinase subunit A (244 aa).

Belongs to the LamB/PxpA family. In terms of assembly, forms a complex composed of PxpA, PxpB and PxpC.

The catalysed reaction is 5-oxo-L-proline + ATP + 2 H2O = L-glutamate + ADP + phosphate + H(+). In terms of biological role, catalyzes the cleavage of 5-oxoproline to form L-glutamate coupled to the hydrolysis of ATP to ADP and inorganic phosphate. The protein is 5-oxoprolinase subunit A of Escherichia coli O157:H7.